The sequence spans 172 residues: Small ribosomal subunit protein uS5 (172 aa).

The S5 DRBM domain maps to 17-80 (LKEKMIAVNR…EEARRNMTKV (64 aa)).

Belongs to the universal ribosomal protein uS5 family. As to quaternary structure, part of the 30S ribosomal subunit. Contacts proteins S4 and S8.

In terms of biological role, with S4 and S12 plays an important role in translational accuracy. Its function is as follows. Located at the back of the 30S subunit body where it stabilizes the conformation of the head with respect to the body. This Polaromonas sp. (strain JS666 / ATCC BAA-500) protein is Small ribosomal subunit protein uS5.